We begin with the raw amino-acid sequence, 130 residues long: Small ribosomal subunit protein uS8 (130 aa).

Belongs to the universal ribosomal protein uS8 family. In terms of assembly, part of the 30S ribosomal subunit. Contacts proteins S5 and S12.

In terms of biological role, one of the primary rRNA binding proteins, it binds directly to 16S rRNA central domain where it helps coordinate assembly of the platform of the 30S subunit. This is Small ribosomal subunit protein uS8 from Shewanella frigidimarina (strain NCIMB 400).